We begin with the raw amino-acid sequence, 516 residues long: Probable cytochrome P450 9f2 (516 aa).

Cysteine 460 provides a ligand contact to heme.

This sequence belongs to the cytochrome P450 family. Heme serves as cofactor.

The protein resides in the endoplasmic reticulum membrane. The protein localises to the microsome membrane. May be involved in the metabolism of insect hormones and in the breakdown of synthetic insecticides. The chain is Probable cytochrome P450 9f2 (Cyp9f2) from Drosophila melanogaster (Fruit fly).